Consider the following 93-residue polypeptide: Putative aspartate aminotransferase (93 aa).

It belongs to the class-I pyridoxal-phosphate-dependent aminotransferase family. Homodimer. It depends on pyridoxal 5'-phosphate as a cofactor.

Its subcellular location is the cytoplasm. The enzyme catalyses L-aspartate + 2-oxoglutarate = oxaloacetate + L-glutamate. This Methylorubrum extorquens (Methylobacterium dichloromethanicum) protein is Putative aspartate aminotransferase.